Consider the following 248-residue polypeptide: tRNA (guanine-N(1)-)-methyltransferase (248 aa).

S-adenosyl-L-methionine is bound by residues Gly-113 and 133–138 (IGDYVL). The tract at residues 227 to 248 (RPAQTIRAKGESQKTPKNKTDG) is disordered. Residues 234 to 248 (AKGESQKTPKNKTDG) are compositionally biased toward basic and acidic residues.

This sequence belongs to the RNA methyltransferase TrmD family. Homodimer.

Its subcellular location is the cytoplasm. The enzyme catalyses guanosine(37) in tRNA + S-adenosyl-L-methionine = N(1)-methylguanosine(37) in tRNA + S-adenosyl-L-homocysteine + H(+). Its function is as follows. Specifically methylates guanosine-37 in various tRNAs. This Rhodopseudomonas palustris (strain TIE-1) protein is tRNA (guanine-N(1)-)-methyltransferase.